The primary structure comprises 89 residues: MSEPGDLSQTIVEEGGPEQETATPENGVIKSESLDEEEKLELQRRLVAQNQERRKSKSGAGKGKLTRSLAVCEESSARPGGESLQDQTL.

Positions 1 to 89 (MSEPGDLSQT…GGESLQDQTL (89 aa)) are disordered. Ser-2 is modified (N-acetylserine). Residues Ser-33 and Ser-56 each carry the phosphoserine modification.

In terms of assembly, interacts with CALM1. Post-translationally, phosphorylation at Ser-56 favors interaction with CALM1.

The protein resides in the cytoplasm. Functionally, may act as a competitive inhibitor of calmodulin-dependent enzymes such as calcineurin in neurons. The polypeptide is cAMP-regulated phosphoprotein 21 (ARPP21) (Bos taurus (Bovine)).